The primary structure comprises 621 residues: Chaperone protein DnaK (621 aa).

T175 bears the Phosphothreonine; by autocatalysis mark. Residues E499–N516 are compositionally biased toward basic and acidic residues. Disordered stretches follow at residues E499–N520 and A583–K621. Residues A583–G602 are compositionally biased toward low complexity. The segment covering G603–K621 has biased composition (acidic residues).

It belongs to the heat shock protein 70 family.

Acts as a chaperone. This Bifidobacterium animalis subsp. lactis (strain AD011) protein is Chaperone protein DnaK.